Consider the following 131-residue polypeptide: L-ectoine synthase (131 aa).

This sequence belongs to the ectoine synthase family.

The catalysed reaction is (2S)-4-acetamido-2-aminobutanoate = L-ectoine + H2O. It functions in the pathway amine and polyamine biosynthesis; ectoine biosynthesis; L-ectoine from L-aspartate 4-semialdehyde: step 3/3. Catalyzes the circularization of gamma-N-acetyl-alpha,gamma-diaminobutyric acid (ADABA) to ectoine (1,4,5,6-tetrahydro-2-methyl-4-pyrimidine carboxylic acid), which is an excellent osmoprotectant. The sequence is that of L-ectoine synthase from Nocardia farcinica (strain IFM 10152).